The sequence spans 749 residues: Sentrin-specific protease 5 (749 aa).

Residues 268–279 (TGDHQENLRDNN) are compositionally biased toward basic and acidic residues. 2 disordered regions span residues 268–288 (TGDH…CNPV) and 394–440 (QESG…EEDG). The tract at residues 557–718 (FYNKHMLDMD…VFVLQYCKCL (162 aa)) is protease. Catalysis depends on residues histidine 640, aspartate 657, and cysteine 707.

It belongs to the peptidase C48 family. In terms of assembly, interacts with CCAR2.

The protein localises to the nucleus. It is found in the nucleolus. In terms of biological role, protease that catalyzes two essential functions in the SUMO pathway: processing of full-length SUMO3 to its mature form and deconjugation of SUMO2 and SUMO3 from targeted proteins. Has weak proteolytic activity against full-length SUMO1 or SUMO1 conjugates. Required for cell division. In Mus musculus (Mouse), this protein is Sentrin-specific protease 5 (Senp5).